A 313-amino-acid polypeptide reads, in one-letter code: Protoheme IX farnesyltransferase (313 aa).

8 consecutive transmembrane segments (helical) span residues 32–52, 53–73, 120–140, 153–173, 180–200, 226–246, 248–268, and 284–304; these read VMSL…GDFH, PVLA…AGAL, ILVN…YVVI, IVIG…AVTG, LLLF…LALF, ILLY…LGYF, AIYG…ALRV, and LFKF…LEVV.

Belongs to the UbiA prenyltransferase family. Protoheme IX farnesyltransferase subfamily.

Its subcellular location is the cell inner membrane. It catalyses the reaction heme b + (2E,6E)-farnesyl diphosphate + H2O = Fe(II)-heme o + diphosphate. It participates in porphyrin-containing compound metabolism; heme O biosynthesis; heme O from protoheme: step 1/1. In terms of biological role, converts heme B (protoheme IX) to heme O by substitution of the vinyl group on carbon 2 of heme B porphyrin ring with a hydroxyethyl farnesyl side group. In Rhodopseudomonas palustris (strain HaA2), this protein is Protoheme IX farnesyltransferase.